Reading from the N-terminus, the 293-residue chain is Taste receptor type 2 member 143 (293 aa).

The Extracellular segment spans residues 1-6 (MPSTPT). Residues 7-27 (LIFIIIFYLVSLASMLQNGFM) traverse the membrane as a helical segment. Over 28–55 (MIVLGREWMRNRTLPAADMIVASLASSR) the chain is Cytoplasmic. A helical membrane pass occupies residues 56–76 (FCLHGIAILANLLASFDFCYQ). Topologically, residues 77–79 (ANL) are extracellular. Residues 80-100 (IGILWDFTNTLIFWLTAWLAI) form a helical membrane-spanning segment. The Cytoplasmic segment spans residues 101 to 127 (FYCVKISSFSHPVLFWLKWRISQLVPR). A helical membrane pass occupies residues 128-148 (LLVVSLIIGGLSAVISATGNF). The Extracellular segment spans residues 149–181 (MANQMTISQGFHGNCTFGHMSLDFYRYYYLYHS). An N-linked (GlcNAc...) asparagine glycan is attached at Asn-162. The helical transmembrane segment at 182 to 202 (VLMWFTPFFLFLVSVIVLMFS) threads the bilayer. The Cytoplasmic segment spans residues 203–227 (LYQHVEKMRGHRPGPWDLHTQAHTM). A helical membrane pass occupies residues 228–248 (ALKSLTFFFIFYIFFFLALVI). Topologically, residues 249–264 (SSTKRKSMQSYYWARE) are extracellular. A helical transmembrane segment spans residues 265–285 (AIIYTGIFLNSIILLFSNPKL). Residues 286–293 (RKALKMRF) lie on the Cytoplasmic side of the membrane.

Belongs to the G-protein coupled receptor T2R family.

It is found in the membrane. Functionally, putative taste receptor which may play a role in the perception of bitterness. The sequence is that of Taste receptor type 2 member 143 (Tas2r143) from Mus musculus (Mouse).